A 191-amino-acid chain; its full sequence is Large ribosomal subunit protein uL3 (191 aa).

Positions 119-138 (AAHGSRFHRRPGSIGNREWP) are disordered.

Belongs to the universal ribosomal protein uL3 family. Part of the 50S ribosomal subunit. Forms a cluster with proteins L14 and L19.

Its function is as follows. One of the primary rRNA binding proteins, it binds directly near the 3'-end of the 23S rRNA, where it nucleates assembly of the 50S subunit. This chain is Large ribosomal subunit protein uL3 (rplC), found in Helicobacter pylori (strain ATCC 700392 / 26695) (Campylobacter pylori).